The chain runs to 522 residues: MKVFVYLLVTFSLTNASPLRNRFNEDHDEFSKDDMARESFDTEEMYNAFLNRRDSSESQLEDHLLSHAKPLYDDFFPKDTSPDDDEDSYWLESRNDDGYDLAKRKRGYDDEEAYDDFDEVDDRADDEGARDVDESDFEEDDKLPAEEESKNDMDEETFEDEPEEDKEEAREEFAEDERADEREDDDADFDFNDEEDEDEVDNKAESDIFTPEDFAGVSDEAMDNFRDDNEEEYADESDDEAEEDSEETADDFEDDPEDESDETFRDEVEDESEENYQDDTEEGSEIKQNDETEEQPEKKFDADKEHEDAPEPLKEKLSDESKARAEDESDKSEDAAKEIKEPEDAVEDFEDGAKVSEDEAELLDDEAELSDDEAELSKDEAEQSSDEAEKSEDKAEKSEDEAELSEDEAKQSEDEAEKAEDAAGKESNDEGKKREDEAVKSKGIARDESEFAKAKKSNLALKRDENRPLAKGLRESAAHLRDFPSEKKSKDAAQGNIENELDYFKRNAFADSKDAEPYEFDK.

An N-terminal signal peptide occupies residues 1–16 (MKVFVYLLVTFSLTNA). 2 stretches are compositionally biased toward basic and acidic residues: residues 72 to 81 (YDDFFPKDTS) and 93 to 102 (SRNDDGYDLA). The segment at 72-497 (YDDFFPKDTS…KSKDAAQGNI (426 aa)) is disordered. A compositionally biased stretch (acidic residues) spans 109 to 125 (DDEEAYDDFDEVDDRAD). Basic and acidic residues predominate over residues 142–152 (KLPAEEESKND). Composition is skewed to acidic residues over residues 153 to 166 (MDEE…EEDK), 173 to 200 (FAED…EDEV), 228 to 261 (DNEE…DESD), and 267 to 283 (EVED…TEEG). Basic and acidic residues predominate over residues 284–343 (SEIKQNDETEEQPEKKFDADKEHEDAPEPLKEKLSDESKARAEDESDKSEDAAKEIKEPE). Residues 319 to 465 (DESKARAEDE…KSNLALKRDE (147 aa)) are a coiled coil. Residues 358 to 374 (DEAELLDDEAELSDDEA) show a composition bias toward acidic residues. Composition is skewed to basic and acidic residues over residues 375–397 (ELSK…KAEK), 407–453 (DEAK…EFAK), and 461–491 (LKRD…KSKD).

In terms of tissue distribution, component of the acid-soluble organic matrix of the aragonitic skeleton (at protein level).

Its subcellular location is the secreted. This chain is Aspartic and glutamic acid-rich protein, found in Acropora millepora (Staghorn coral).